The following is a 480-amino-acid chain: Glutamate--tRNA ligase (480 aa).

The 'HIGH' region signature appears at 8-18 (PSPTGPLHIGG). The short motif at 249 to 253 (KMSKR) is the 'KMSKS' region element. Lys-252 contributes to the ATP binding site.

The protein belongs to the class-I aminoacyl-tRNA synthetase family. Glutamate--tRNA ligase type 1 subfamily. In terms of assembly, monomer.

The protein resides in the cytoplasm. The enzyme catalyses tRNA(Glu) + L-glutamate + ATP = L-glutamyl-tRNA(Glu) + AMP + diphosphate. Functionally, catalyzes the attachment of glutamate to tRNA(Glu) in a two-step reaction: glutamate is first activated by ATP to form Glu-AMP and then transferred to the acceptor end of tRNA(Glu). The chain is Glutamate--tRNA ligase from Carboxydothermus hydrogenoformans (strain ATCC BAA-161 / DSM 6008 / Z-2901).